Reading from the N-terminus, the 191-residue chain is Probable chemoreceptor glutamine deamidase CheD (191 aa).

It belongs to the CheD family.

The enzyme catalyses L-glutaminyl-[protein] + H2O = L-glutamyl-[protein] + NH4(+). Its function is as follows. Probably deamidates glutamine residues to glutamate on methyl-accepting chemotaxis receptors (MCPs), playing an important role in chemotaxis. This chain is Probable chemoreceptor glutamine deamidase CheD, found in Hydrogenovibrio crunogenus (strain DSM 25203 / XCL-2) (Thiomicrospira crunogena).